Consider the following 115-residue polypeptide: MARAKNGTVHVARRKRILKKTKGFWGTKKSNYKKAKDTLXKGMMYATRDRKVRKRDFRRLWISRISAALSDTGVTYSRFIEGLLKSNIKINRKILSNLAIEDVEAFKKIVLEIRR.

It belongs to the bacterial ribosomal protein bL20 family.

In terms of biological role, binds directly to 23S ribosomal RNA and is necessary for the in vitro assembly process of the 50S ribosomal subunit. It is not involved in the protein synthesizing functions of that subunit. This chain is Large ribosomal subunit protein bL20 (rplT), found in Borreliella burgdorferi (strain ATCC 35210 / DSM 4680 / CIP 102532 / B31) (Borrelia burgdorferi).